Here is a 130-residue protein sequence, read N- to C-terminus: Small ribosomal subunit protein uS9 (130 aa).

The protein belongs to the universal ribosomal protein uS9 family.

The polypeptide is Small ribosomal subunit protein uS9 (Shewanella denitrificans (strain OS217 / ATCC BAA-1090 / DSM 15013)).